The chain runs to 476 residues: FAD-dependent monooxygenase prhF (476 aa).

Residues Glu41, Gly55, and Arg114 each contribute to the FAD site. Residue Tyr222 is part of the active site. Positions 314 and 327 each coordinate FAD. The N-linked (GlcNAc...) asparagine glycan is linked to Asn343. A helical transmembrane segment spans residues 447–467; that stretch reads LGSTPIQMLTLLLPCLFYFMY. N-linked (GlcNAc...) asparagine glycosylation occurs at Asn471.

This sequence belongs to the paxM FAD-dependent monooxygenase family. FAD is required as a cofactor.

Its subcellular location is the membrane. The protein operates within secondary metabolite biosynthesis; terpenoid biosynthesis. In terms of biological role, FAD-dependent monooxygenase; part of the gene cluster that mediates the biosynthesis of paraherquonin, a meroterpenoid with a unique, highly congested hexacyclic molecular architecture. The first step of the pathway is the synthesis of 3,5-dimethylorsellinic acid (DMOA) by the polyketide synthase prhL. Synthesis of DMOA is followed by farnesylation by the prenyltransferase prhE, methylesterification by the methyl-transferase prhM, epoxidation of the prenyl chain by the flavin-dependent monooxygenase prhF, and cyclization of the farnesyl moiety by the terpene cyclase prhH, to yield the tetracyclic intermediate, protoaustinoid A. The short chain dehydrogenase prhI then oxidizes the C-3 alcohol group of the terpene cyclase product to transform protoaustinoid A into protoaustinoid B. The FAD-binding monooxygenase prhJ catalyzes the oxidation of protoaustinoid B into preaustinoid A which is further oxidized into preaustinoid A1 by FAD-binding monooxygenase phrK. Finally, prhA leads to berkeleydione via the berkeleyone B intermediate. PrhA is a multifunctional dioxygenase that first desaturates at C5-C6 to form berkeleyone B, followed by rearrangement of the A/B-ring to form the cycloheptadiene moiety in berkeleydione. Berkeleydione serves as the key intermediate for the biosynthesis of paraherquonin as well as many other meroterpenoids. The cytochrome P450 monooxygenases prhB, prhD, and prhN, as well as the isomerase prhC, are probably involved in the late stage of paraherquonin biosynthesis, after the production of berkeleydione. Especially prhC might be a multifunctional enzyme that catalyzes the D-ring expansion via intramolecular methoxy rearrangement, as well as the hydrolysis of the expanded D-ring. The sequence is that of FAD-dependent monooxygenase prhF from Penicillium brasilianum.